The primary structure comprises 88 residues: Small ribosomal subunit protein uS15c (88 aa).

Belongs to the universal ribosomal protein uS15 family. In terms of assembly, part of the 30S ribosomal subunit.

It is found in the plastid. The protein resides in the chloroplast. In Cycas taitungensis (Prince sago), this protein is Small ribosomal subunit protein uS15c (rps15).